The primary structure comprises 202 residues: Large ribosomal subunit protein uL4 (202 aa).

Residues 47-67 (KTKAEVSGGGVKPWKQKGTGR) are disordered.

It belongs to the universal ribosomal protein uL4 family. Part of the 50S ribosomal subunit.

One of the primary rRNA binding proteins, this protein initially binds near the 5'-end of the 23S rRNA. It is important during the early stages of 50S assembly. It makes multiple contacts with different domains of the 23S rRNA in the assembled 50S subunit and ribosome. Functionally, forms part of the polypeptide exit tunnel. The chain is Large ribosomal subunit protein uL4 from Dichelobacter nodosus (strain VCS1703A).